The chain runs to 647 residues: ATP-dependent zinc metalloprotease FtsH (647 aa).

The disordered stretch occupies residues 1–33; the sequence is MARKSDEDTNPMDKFMDRLRGSPGDGGPGRPDP. Topologically, residues 1 to 39 are cytoplasmic; that stretch reads MARKSDEDTNPMDKFMDRLRGSPGDGGPGRPDPSQRKVH. Residues 40 to 60 traverse the membrane as a helical segment; the sequence is FSIWYFILALLLIVWMQTYMG. The Periplasmic portion of the chain corresponds to 61–134; that stretch reads EQQSEKISYS…RFSGDVQNPW (74 aa). Residues 135-155 form a helical membrane-spanning segment; the sequence is LGLITWWLLPFAIMIFFWSFL. The Cytoplasmic segment spans residues 156–647; sequence MRRMGGGPQG…DPVQVEGGAA (492 aa). 227–234 provides a ligand contact to ATP; the sequence is GAPGTGKT. Position 449 (H449) interacts with Zn(2+). E450 is an active-site residue. 2 residues coordinate Zn(2+): H453 and D526.

It in the central section; belongs to the AAA ATPase family. The protein in the C-terminal section; belongs to the peptidase M41 family. Homohexamer. Requires Zn(2+) as cofactor.

It localises to the cell inner membrane. Acts as a processive, ATP-dependent zinc metallopeptidase for both cytoplasmic and membrane proteins. Plays a role in the quality control of integral membrane proteins. This Syntrophobacter fumaroxidans (strain DSM 10017 / MPOB) protein is ATP-dependent zinc metalloprotease FtsH.